Reading from the N-terminus, the 184-residue chain is Photosystem I assembly protein Ycf4 (184 aa).

The next 2 membrane-spanning stretches (helical) occupy residues 22-42 and 57-77; these read FCWAFILFFGSLGFLLVGTSS and IVFFPQGIVMSFYGIAGLFIS.

The protein belongs to the Ycf4 family.

The protein localises to the plastid. Its subcellular location is the chloroplast thylakoid membrane. Functionally, seems to be required for the assembly of the photosystem I complex. The polypeptide is Photosystem I assembly protein Ycf4 (Gossypium barbadense (Sea Island cotton)).